The primary structure comprises 500 residues: Probable cytosol aminopeptidase (500 aa).

The Mn(2+) site is built by Lys-264 and Asp-269. The active site involves Lys-276. Mn(2+) is bound by residues Asp-287, Asp-346, and Glu-348. Arg-350 is a catalytic residue.

The protein belongs to the peptidase M17 family. Mn(2+) serves as cofactor.

It localises to the cytoplasm. The catalysed reaction is Release of an N-terminal amino acid, Xaa-|-Yaa-, in which Xaa is preferably Leu, but may be other amino acids including Pro although not Arg or Lys, and Yaa may be Pro. Amino acid amides and methyl esters are also readily hydrolyzed, but rates on arylamides are exceedingly low.. The enzyme catalyses Release of an N-terminal amino acid, preferentially leucine, but not glutamic or aspartic acids.. Presumably involved in the processing and regular turnover of intracellular proteins. Catalyzes the removal of unsubstituted N-terminal amino acids from various peptides. The sequence is that of Probable cytosol aminopeptidase from Chlamydia abortus (strain DSM 27085 / S26/3) (Chlamydophila abortus).